A 119-amino-acid polypeptide reads, in one-letter code: NADH-quinone oxidoreductase subunit A (119 aa).

A run of 3 helical transmembrane segments spans residues 9-29, 63-83, and 88-108; these read VLLF…LGYV, LVAI…PWAV, and VGGA…VGFV.

Belongs to the complex I subunit 3 family. In terms of assembly, NDH-1 is composed of 14 different subunits. Subunits NuoA, H, J, K, L, M, N constitute the membrane sector of the complex.

The protein resides in the cell inner membrane. The enzyme catalyses a quinone + NADH + 5 H(+)(in) = a quinol + NAD(+) + 4 H(+)(out). Functionally, NDH-1 shuttles electrons from NADH, via FMN and iron-sulfur (Fe-S) centers, to quinones in the respiratory chain. The immediate electron acceptor for the enzyme in this species is believed to be ubiquinone. Couples the redox reaction to proton translocation (for every two electrons transferred, four hydrogen ions are translocated across the cytoplasmic membrane), and thus conserves the redox energy in a proton gradient. This Delftia acidovorans (strain DSM 14801 / SPH-1) protein is NADH-quinone oxidoreductase subunit A.